Consider the following 826-residue polypeptide: Lon protease (826 aa).

A compositionally biased stretch (basic and acidic residues) spans 1-20 (MSEEELNNRDTESKQEHDEN). The tract at residues 1–27 (MSEEELNNRDTESKQEHDENNSNFEAG) is disordered. In terms of domain architecture, Lon N-terminal spans 33–231 (LPVLPLREVI…KVHALLEKEL (199 aa)). 384–391 (GPPGVGKT) is a binding site for ATP. The Lon proteolytic domain occupies 620–801 (ENLVGMTTGL…SEALTFTLAE (182 aa)). Active-site residues include Ser-707 and Lys-750.

Belongs to the peptidase S16 family. In terms of assembly, homohexamer. Organized in a ring with a central cavity.

Its subcellular location is the cytoplasm. The catalysed reaction is Hydrolysis of proteins in presence of ATP.. In terms of biological role, ATP-dependent serine protease that mediates the selective degradation of mutant and abnormal proteins as well as certain short-lived regulatory proteins. Required for cellular homeostasis and for survival from DNA damage and developmental changes induced by stress. Degrades polypeptides processively to yield small peptide fragments that are 5 to 10 amino acids long. Binds to DNA in a double-stranded, site-specific manner. This is Lon protease from Neorickettsia sennetsu (strain ATCC VR-367 / Miyayama) (Ehrlichia sennetsu).